The following is a 103-amino-acid chain: Large ribosomal subunit protein uL24 (103 aa).

Positions 70–103 are disordered; it reads YLDPSTNEPTRLGVRREDGKRVRYAKKSGKDLEN.

It belongs to the universal ribosomal protein uL24 family. As to quaternary structure, part of the 50S ribosomal subunit.

One of two assembly initiator proteins, it binds directly to the 5'-end of the 23S rRNA, where it nucleates assembly of the 50S subunit. Its function is as follows. One of the proteins that surrounds the polypeptide exit tunnel on the outside of the subunit. This is Large ribosomal subunit protein uL24 from Lactiplantibacillus plantarum (strain ATCC BAA-793 / NCIMB 8826 / WCFS1) (Lactobacillus plantarum).